The chain runs to 244 residues: High frequency lysogenization protein HflD homolog (244 aa).

The protein belongs to the HflD family.

The protein localises to the cytoplasm. The protein resides in the cell inner membrane. This chain is High frequency lysogenization protein HflD homolog, found in Acinetobacter baumannii (strain SDF).